The following is a 249-amino-acid chain: tRNA pseudouridine synthase A (249 aa).

The active-site Nucleophile is the D53. Y111 lines the substrate pocket.

It belongs to the tRNA pseudouridine synthase TruA family. Homodimer.

The catalysed reaction is uridine(38/39/40) in tRNA = pseudouridine(38/39/40) in tRNA. In terms of biological role, formation of pseudouridine at positions 38, 39 and 40 in the anticodon stem and loop of transfer RNAs. The sequence is that of tRNA pseudouridine synthase A from Streptococcus equi subsp. zooepidemicus (strain MGCS10565).